A 245-amino-acid chain; its full sequence is Biosynthetic peptidoglycan transglycosylase (245 aa).

The chain crosses the membrane as a helical span at residues 20–42 (VYAGSVFAGAWLATQLFYLAQIA).

This sequence belongs to the glycosyltransferase 51 family.

Its subcellular location is the cell inner membrane. The catalysed reaction is [GlcNAc-(1-&gt;4)-Mur2Ac(oyl-L-Ala-gamma-D-Glu-L-Lys-D-Ala-D-Ala)](n)-di-trans,octa-cis-undecaprenyl diphosphate + beta-D-GlcNAc-(1-&gt;4)-Mur2Ac(oyl-L-Ala-gamma-D-Glu-L-Lys-D-Ala-D-Ala)-di-trans,octa-cis-undecaprenyl diphosphate = [GlcNAc-(1-&gt;4)-Mur2Ac(oyl-L-Ala-gamma-D-Glu-L-Lys-D-Ala-D-Ala)](n+1)-di-trans,octa-cis-undecaprenyl diphosphate + di-trans,octa-cis-undecaprenyl diphosphate + H(+). The protein operates within cell wall biogenesis; peptidoglycan biosynthesis. Peptidoglycan polymerase that catalyzes glycan chain elongation from lipid-linked precursors. The polypeptide is Biosynthetic peptidoglycan transglycosylase (Burkholderia orbicola (strain MC0-3)).